An 82-amino-acid chain; its full sequence is Small ribosomal subunit protein uS17c (82 aa).

Belongs to the universal ribosomal protein uS17 family. As to quaternary structure, part of the 30S ribosomal subunit.

It is found in the plastid. Its subcellular location is the chloroplast. Functionally, one of the primary rRNA binding proteins, it binds specifically to the 5'-end of 16S ribosomal RNA. The protein is Small ribosomal subunit protein uS17c (rps17) of Emiliania huxleyi (Coccolithophore).